A 1320-amino-acid polypeptide reads, in one-letter code: Immunoglobulin superfamily member 1 (1320 aa).

An N-terminal signal peptide occupies residues 1–18; that stretch reads MMLRTFTLLLLCIWLNRG. At 19–504 the chain is on the extracellular side; the sequence is MTSMAAVESQ…LPWNSILNEA (486 aa). 5 Ig-like C2-type domains span residues 29-113, 115-212, 224-308, 312-399, and 401-482; these read PELW…KILE, EAPG…KLVV, HPGP…IWVT, PKTW…ATYN, and VELI…HRSE. N-linked (GlcNAc...) asparagine glycosylation occurs at N44. C49 and C97 are oxidised to a cystine. N-linked (GlcNAc...) asparagine glycosylation is found at N329, N365, and N372. 2 cysteine pairs are disulfide-bonded: C334–C383 and C423–C466. A helical membrane pass occupies residues 505–525; that stretch reads IRVSLTVQFLSLLLLVLWLQW. Over 526-534 the chain is Cytoplasmic; it reads KCRRLRLRE. The chain crosses the membrane as a helical span at residues 535-555; the sequence is AWLLGTAQGVAMLVILIALLC. Over 556-1320 the chain is Extracellular; it reads CGLCNGALTE…GVSVEQTVPI (765 aa). Ig-like C2-type domains follow at residues 572–665, 662–756, 761–853, 857–942, 949–1044, 1049–1134, and 1145–1226; these read PTPK…VGTD, VGTD…ELVI, PKPF…LIVT, PKPT…YLST, TDTF…ELIV, PKPS…NHSN, and PKPS…EPSD. N591, N731, N782, N830, N874, N923, N970, N1011, and N1066 each carry an N-linked (GlcNAc...) asparagine glycan. The cysteines at positions 783 and 833 are disulfide-linked. C879 and C926 form a disulfide bridge. A disulfide bridge connects residues C1071 and C1118. N-linked (GlcNAc...) asparagine glycans are attached at residues N1131 and N1207. C1167 and C1210 are joined by a disulfide.

As to quaternary structure, interacts with INHA; the interaction is not confirmed by standard receptor binding assays. Interacts with ACVR1B; the interaction appears to be ligand-dependent as it is diminished by inhibin B and activin A. Interacts with ACVR2A, ACVR2B, ACVRL1 and BMPR1B. Interacts with HECTD1. Expressed in pituitary gland, testis and liver. Isoform 2 is expressed pituitary gland and testis.

It is found in the membrane. Its subcellular location is the secreted. Its function is as follows. Seems to be a coreceptor in inhibin signaling, but seems not to be a high-affinity inhibin receptor. Antagonizes activin A signaling in the presence or absence of inhibin B. Necessary to mediate a specific antagonistic effect of inhibin B on activin-stimulated transcription. The protein is Immunoglobulin superfamily member 1 (Igsf1) of Rattus norvegicus (Rat).